Consider the following 348-residue polypeptide: D-alanine--D-alanine ligase (348 aa).

Residues 136 to 341 (KYLLQTVGIP…YSDLIEELIQ (206 aa)) enclose the ATP-grasp domain. Residue 169 to 224 (EGSLIYPVFVKPANMGSSVGISKVENREELQEALEEAFRYDARAIVEQGIEAREIE) participates in ATP binding. Mg(2+) is bound by residues Asp-295, Glu-308, and Asn-310.

Belongs to the D-alanine--D-alanine ligase family. Mg(2+) serves as cofactor. It depends on Mn(2+) as a cofactor.

It is found in the cytoplasm. It catalyses the reaction 2 D-alanine + ATP = D-alanyl-D-alanine + ADP + phosphate + H(+). It participates in cell wall biogenesis; peptidoglycan biosynthesis. Functionally, cell wall formation. The chain is D-alanine--D-alanine ligase (ddl) from Enterococcus faecalis (strain ATCC 700802 / V583).